The sequence spans 300 residues: 4-hydroxy-tetrahydrodipicolinate synthase (300 aa).

Thr56 contributes to the pyruvate binding site. The active-site Proton donor/acceptor is Tyr145. The Schiff-base intermediate with substrate role is filled by Lys173. Val215 contributes to the pyruvate binding site.

This sequence belongs to the DapA family. As to quaternary structure, homotetramer; dimer of dimers.

The protein resides in the cytoplasm. The enzyme catalyses L-aspartate 4-semialdehyde + pyruvate = (2S,4S)-4-hydroxy-2,3,4,5-tetrahydrodipicolinate + H2O + H(+). The protein operates within amino-acid biosynthesis; L-lysine biosynthesis via DAP pathway; (S)-tetrahydrodipicolinate from L-aspartate: step 3/4. Its function is as follows. Catalyzes the condensation of (S)-aspartate-beta-semialdehyde [(S)-ASA] and pyruvate to 4-hydroxy-tetrahydrodipicolinate (HTPA). This is 4-hydroxy-tetrahydrodipicolinate synthase from Prochlorococcus marinus (strain MIT 9301).